The sequence spans 348 residues: Ubiquitin thioesterase OTU1 (348 aa).

Over residues 1–11 (MFGPAKGRHFG) the composition is skewed to basic residues. The disordered stretch occupies residues 1 to 39 (MFGPAKGRHFGVHPAPGFPGGVSQQAAGTKAGPAGAWPV). The segment at 50–128 (RCKAKDGTHV…IIEEDQTRPR (79 aa)) is UBX-like. Positions 149-274 (LTRTVVPADN…GIHYDPLQRN (126 aa)) constitute an OTU domain. The segment at 154–160 (VPADNSC) is cys-loop. The active site involves Asp-157. Cys-160 serves as the catalytic Nucleophile. The tract at residues 213-223 (IKRDDTWGGAI) is variable-loop. Positions 263–267 (YDGIH) are his-loop. Ile-266 is a substrate binding site. Residue His-267 is part of the active site. The S2 site stretch occupies residues 291–296 (DIVLVQ). A C2H2-type zinc finger spans residues 318 to 342 (LRCMVCQKGLTGQAEAREHAKETGH). The active site involves His-342.

In terms of assembly, interacts with VCP; the interaction is direct. Interacts with FAF2/UBXD8. Interacts with DERL1; however interaction is dependent on the UBAX-like region, suggesting that it may be indirect. Interacts with PLAA, UBXN6 and VCP; may form a complex involved in macroautophagy.

The protein localises to the cytoplasm. It carries out the reaction Thiol-dependent hydrolysis of ester, thioester, amide, peptide and isopeptide bonds formed by the C-terminal Gly of ubiquitin (a 76-residue protein attached to proteins as an intracellular targeting signal).. Its function is as follows. Hydrolase that can remove conjugated ubiquitin from proteins and participates in endoplasmic reticulum-associated degradation (ERAD) for misfolded lumenal proteins. May act by triming the ubiquitin chain on the associated substrate to facilitate their threading through the VCP/p97 pore. Ubiquitin moieties on substrates may present a steric impediment to the threading process when the substrate is transferred to the VCP pore and threaded through VCP's axial channel. Mediates deubiquitination of 'Lys-27'-, 'Lys-29'- and 'Lys-33'-linked polyubiquitin chains. Also able to hydrolyze 'Lys-11'-linked ubiquitin chains. Cleaves both polyubiquitin and di-ubiquitin. May play a role in macroautophagy, regulating for instance the clearance of damaged lysosomes. May recruit PLAA, UBXN6 and VCP to damaged lysosome membranes decorated with K48-linked ubiquitin chains and remove these chains allowing autophagosome formation. The protein is Ubiquitin thioesterase OTU1 (YOD1) of Homo sapiens (Human).